The primary structure comprises 1598 residues: Fatty acid synthase subunit alpha (1598 aa).

The interval 96–134 (RTQPHKSSAPQEPVPKAAPKAAPPVPVATAPLPEPGRQV) is disordered. A compositionally biased stretch (low complexity) spans 104 to 115 (APQEPVPKAAPK). A Carrier domain is found at 143-221 (DVPIQSRDVI…QIVSGSTSTT (79 aa)). An O-(pantetheine 4'-phosphoryl)serine modification is found at Ser-181. The interval 543–784 (LKGKTVLLTG…LAALLVNPFA (242 aa)) is ketoreductase (KR) domain. The tract at residues 818–844 (KQDSTSTPTHQHLPSHHHVDEPEIGKP) is disordered. The span at 820–829 (DSTSTPTHQH) shows a compositional bias: polar residues. A Ketosynthase family 3 (KS3) domain is found at 992-1524 (HEIVLTRDLA…QKGAQAIIVH (533 aa)). The active-site For beta-ketoacyl synthase activity is Cys-1175. Residues 1280–1301 (ASDKTGRSVPSPGKGTLTNARE) are disordered. Active-site for beta-ketoacyl synthase activity residues include His-1409 and His-1450.

This sequence belongs to the thiolase-like superfamily. Fungal fatty acid synthetase subunit alpha family. As to quaternary structure, fatty acid synthase is composed of alpha and beta subunits.

The catalysed reaction is acetyl-CoA + n malonyl-CoA + 2n NADPH + 4n H(+) = a long-chain-acyl-CoA + n CoA + n CO2 + 2n NADP(+).. It carries out the reaction a fatty acyl-[ACP] + malonyl-[ACP] + H(+) = a 3-oxoacyl-[ACP] + holo-[ACP] + CO2. The enzyme catalyses a (3R)-hydroxyacyl-[ACP] + NADP(+) = a 3-oxoacyl-[ACP] + NADPH + H(+). It participates in mycotoxin biosynthesis. Fatty acid synthase subunit alpha; part of the gene cluster that mediates the biosynthesis of gramillins A and B, bicyclic lipopeptides that induce cell death in maize leaves but not in wheat leaves. The nonribosomal peptide synthetase GRA1 incorporates respectively a glutamic adic (Glu), a leucine (Leu), a serine (Ser), a hydroxyglutamine (HOGln), a 2-amino decanoic acid, and 2 cysteins (CysB and CysA). The biosynthesis of 2-amino decanoic acid incorporated in gramillins could be initiated by a fatty acid synthase composed of the alpha and beta subunits FGSG_00036 and FGSG_11656. The cytochrome P450 monooxygenase FGSG_15680 could hydroxylate the fatty acid chain. Subsequent oxidation to the ketone by the oxidoreductase FGSG_00048 and transamination by aminotransferase FGSG_00049 could form 2-amino-decanoic acid. On the other hand, FGSG_15680 could also be responsible for the HO-modified glutamine at the gamma-position. Whether hydroxylation occurs on the fully assembled product or on the Gln residue prior to assembly into the gramillins requires further proof. The thioredoxin FGSG_00043 could also be required for the disulfide-bond formation between CysA and CysB. The specific involvement of the remaining proteins from the cluster is more difficult to discern, but could have broader regulatory (FGSG_00040 and FGSG_11657) or enzymatic functions (FGSG_00044 and FGSG_00045). The final C-domain of GRA1 does not possess the expected sequence of a termination CT domain, often implicated in macrocyclization and release of a cyclopeptidein fungal NRPs; and the thioesterase FGSG_00047 may act in concert with the terminal C-domain of GRA1 to catalyze the formation of the macrocyclic anhydride and release of the products. This Gibberella zeae (strain ATCC MYA-4620 / CBS 123657 / FGSC 9075 / NRRL 31084 / PH-1) (Wheat head blight fungus) protein is Fatty acid synthase subunit alpha.